A 101-amino-acid polypeptide reads, in one-letter code: Large ribosomal subunit protein P1 (101 aa).

The segment covering 61–72 (AAPAAAAAPAAA) has biased composition (low complexity). The segment at 61–101 (AAPAAAAAPAAAEEAEEEAEEEEEEEEAEEEAAAGLGALFG) is disordered. Acidic residues predominate over residues 73–92 (EEAEEEAEEEEEEEEAEEEA).

This sequence belongs to the eukaryotic ribosomal protein P1/P2 family. In terms of assembly, part of the 50S ribosomal subunit. Homodimer, it forms part of the ribosomal stalk which helps the ribosome interact with GTP-bound translation factors. Forms a heptameric uL10/P0(P1)2(P1)2(P1)2 complex, where uL10/P0 forms an elongated spine to which the P1 dimers bind in a sequential fashion.

Its function is as follows. Forms part of the ribosomal stalk, playing a central role in the interaction of the ribosome with GTP-bound translation factors. The chain is Large ribosomal subunit protein P1 from Methanothermobacter thermautotrophicus (strain ATCC 29096 / DSM 1053 / JCM 10044 / NBRC 100330 / Delta H) (Methanobacterium thermoautotrophicum).